The following is a 213-amino-acid chain: N-(5'-phosphoribosyl)anthranilate isomerase (213 aa).

It belongs to the TrpF family.

It carries out the reaction N-(5-phospho-beta-D-ribosyl)anthranilate = 1-(2-carboxyphenylamino)-1-deoxy-D-ribulose 5-phosphate. Its pathway is amino-acid biosynthesis; L-tryptophan biosynthesis; L-tryptophan from chorismate: step 3/5. In Rhodopseudomonas palustris (strain ATCC BAA-98 / CGA009), this protein is N-(5'-phosphoribosyl)anthranilate isomerase.